Here is a 984-residue protein sequence, read N- to C-terminus: Putative formate dehydrogenase SA2102 (984 aa).

The 2Fe-2S ferredoxin-type domain occupies 3-79; it reads EHLVVTLDGK…PMTVNTVNND (77 aa). [2Fe-2S] cluster-binding residues include C37, C48, C51, and C63. Positions 79 to 119 constitute a 4Fe-4S His(Cys)3-ligated-type domain; that stretch reads DVKDAQKEALDRILEKHMLYCTVCDYNNGDCEIHNTMDAWG. Residues H95, C99, C102, C109, C147, C150, C153, C157, C190, C193, C196, C200, C264, C267, C271, and C299 each contribute to the [4Fe-4S] cluster site. 2 4Fe-4S ferredoxin-type domains span residues 138-165 and 181-211; these read PFYRYDPNQCILCGRCVEACQDIEVNET and NDVPINESSCVSCGQCATVCPCNAMMEVNME. The tract at residues 252–984 is formate dehydrogenase; it reads MRKERIKKTK…YVFPGNQVDK (733 aa). The region spanning 257–313 is the 4Fe-4S Mo/W bis-MGD-type domain; it reads IKKTKTVCTYCGVGCSFEVWTKDREILKVQPSHDSPANKIATCVKGKFSWGHINSDQ.

It in the C-terminal section; belongs to the prokaryotic molybdopterin-containing oxidoreductase family. The cofactor is [2Fe-2S] cluster. Requires [4Fe-4S] cluster as cofactor. It depends on Mo-bis(molybdopterin guanine dinucleotide) as a cofactor.

The catalysed reaction is formate + NAD(+) = CO2 + NADH. The protein is Putative formate dehydrogenase SA2102 of Staphylococcus aureus (strain N315).